A 132-amino-acid chain; its full sequence is Amicyanin (132 aa).

The N-terminal stretch at Met1–Ala26 is a signal peptide. Gln27 bears the Pyrrolidone carboxylic acid mark. Residues Gln27–Glu132 form the Plastocyanin-like domain. Residues His80, Cys119, His122, and Met125 each coordinate Cu cation.

Cu cation is required as a cofactor.

The protein localises to the periplasm. It functions in the pathway one-carbon metabolism; methylamine degradation. In terms of biological role, primary acceptor of electrons from methylamine dehydrogenase. Passes those electrons on either a soluble cytochrome c or to pseudoazurin. The protein is Amicyanin (mauC) of Paracoccus versutus (Thiobacillus versutus).